A 136-amino-acid polypeptide reads, in one-letter code: Peptide methionine sulfoxide reductase MsrB (136 aa).

The MsrB domain occupies 9–136 (DAEWKALLAE…NSASLDFKKK (128 aa)). Residues Cys-53, Cys-56, Cys-102, and Cys-105 each contribute to the Zn(2+) site. Cys-125 acts as the Nucleophile in catalysis.

The protein belongs to the MsrB Met sulfoxide reductase family. It depends on Zn(2+) as a cofactor.

The enzyme catalyses L-methionyl-[protein] + [thioredoxin]-disulfide + H2O = L-methionyl-(R)-S-oxide-[protein] + [thioredoxin]-dithiol. The protein is Peptide methionine sulfoxide reductase MsrB of Variovorax paradoxus (strain S110).